The chain runs to 97 residues: Acylphosphatase (97 aa).

The region spanning 9–97 (RKHIVVTGLV…ETARAFGVRQ (89 aa)) is the Acylphosphatase-like domain. Catalysis depends on residues Arg-24 and Asn-42.

Belongs to the acylphosphatase family.

It catalyses the reaction an acyl phosphate + H2O = a carboxylate + phosphate + H(+). The chain is Acylphosphatase (acyP) from Bifidobacterium longum (strain NCC 2705).